The following is a 319-amino-acid chain: Phospho-N-acetylmuramoyl-pentapeptide-transferase (319 aa).

9 consecutive transmembrane segments (helical) span residues Leu-5–Trp-25, Thr-51–Tyr-71, Val-79–Leu-99, Leu-119–Tyr-139, Val-149–Leu-169, Leu-173–Phe-193, Asn-197–Phe-217, Ile-224–Gly-246, and Val-299–Gly-319.

It belongs to the glycosyltransferase 4 family. MraY subfamily. Mg(2+) is required as a cofactor.

It localises to the cell membrane. The enzyme catalyses UDP-N-acetyl-alpha-D-muramoyl-L-alanyl-gamma-D-glutamyl-L-lysyl-D-alanyl-D-alanine + di-trans,octa-cis-undecaprenyl phosphate = Mur2Ac(oyl-L-Ala-gamma-D-Glu-L-Lys-D-Ala-D-Ala)-di-trans,octa-cis-undecaprenyl diphosphate + UMP. Its pathway is cell wall biogenesis; peptidoglycan biosynthesis. Functionally, catalyzes the initial step of the lipid cycle reactions in the biosynthesis of the cell wall peptidoglycan: transfers peptidoglycan precursor phospho-MurNAc-pentapeptide from UDP-MurNAc-pentapeptide onto the lipid carrier undecaprenyl phosphate, yielding undecaprenyl-pyrophosphoryl-MurNAc-pentapeptide, known as lipid I. The polypeptide is Phospho-N-acetylmuramoyl-pentapeptide-transferase (Lactobacillus delbrueckii subsp. bulgaricus (strain ATCC BAA-365 / Lb-18)).